The following is a 122-amino-acid chain: Flagellar protein FliT (122 aa).

The segment at 1–50 is required for homodimerization; it reads MTSTVEFINRWQRIALLSQSLLELAQRGEWDLLLQQEVSYLQSIETVMEK. The tract at residues 60–98 is fliD binding; it reads IQDMVAGYIKQTLDNEQLLKGLLQQRLDELSSLIGQSTR.

Belongs to the FliT family. Homodimer. Interacts with FliD and FlhC.

The protein localises to the cytoplasm. It localises to the cytosol. In terms of biological role, dual-function protein that regulates the transcription of class 2 flagellar operons and that also acts as an export chaperone for the filament-capping protein FliD. As a transcriptional regulator, acts as an anti-FlhDC factor; it directly binds FlhC, thus inhibiting the binding of the FlhC/FlhD complex to class 2 promoters, resulting in decreased expression of class 2 flagellar operons. As a chaperone, effects FliD transition to the membrane by preventing its premature polymerization, and by directing it to the export apparatus. In Salmonella gallinarum (strain 287/91 / NCTC 13346), this protein is Flagellar protein FliT.